Reading from the N-terminus, the 522-residue chain is MTTITEELIARLKQGIISGVDLQPRQVNVGTVIAVGDGVARLSGLDQVVASEIVEFPPKAGRNESIYGIALNLEQDSVAAIILGDDESIEEGDLVTSTGRVISVPVGQGLLGRVVNPLGQPIDGKGPIQYEKMRPIERIAPGVITRKSVDTPVQTGIIAIDALIPIGRGQRELIIGDRQTGKTAVAIDTIINQKGQGMVCIYVAIGQRRAQVAQVVGTLEKYGAMEYTIVVSATASESAALQYIAPYAGCAMGEEIMENGVMLNGQLVKDALIVYDDLSKHAVAYRQVSLLLRRPPGREAYPGDVFYLHSRLLERAARLNEEYGGGSLTALPVIETQANDVSAYIPTNVISITDGQIYLEADLFNAGQRPALNVGISVSRVGSAAQTRAMRAVAGKLKGELAQFRDLAAFAQFASDLDATTKAQIERGQRLQELLKQPQFQPLAVEDQVAVLYAATNNYLDDVPVAMITKWRDDFLAFLRTAHPEVRKLIYDNRLDRKFPTPEVKEALEAAIKEFKATSNYS.

176–183 (GDRQTGKT) serves as a coordination point for ATP.

Belongs to the ATPase alpha/beta chains family. In terms of assembly, F-type ATPases have 2 components, CF(1) - the catalytic core - and CF(0) - the membrane proton channel. CF(1) has five subunits: alpha(3), beta(3), gamma(1), delta(1), epsilon(1). CF(0) has four main subunits: a, b, b' and c.

The protein localises to the cell membrane. It catalyses the reaction ATP + H2O + 4 H(+)(in) = ADP + phosphate + 5 H(+)(out). Produces ATP from ADP in the presence of a proton gradient across the membrane. The alpha chain is a regulatory subunit. In Chloroflexus aggregans (strain MD-66 / DSM 9485), this protein is ATP synthase subunit alpha.